A 506-amino-acid polypeptide reads, in one-letter code: Alpha-L-arabinofuranosidase B (506 aa).

The N-terminal stretch at 1–26 is a signal peptide; it reads MSSGLSLERACAVALGIVASASLVAA. The catalytic stretch occupies residues 27-343; it reads GPCDIYSSGG…ADIVAAKYAI (317 aa). 3 cysteine pairs are disulfide-bonded: C29–C39, C89–C94, and C184–C185. The N-linked (GlcNAc...) asparagine glycan is linked to N91. D227 contacts substrate. E229 functions as the Nucleophile in the catalytic mechanism. N230 and G304 together coordinate substrate. D305 (proton donor) is an active-site residue. Residues 344–506 form an ABD region; the sequence is ASLTSGPALT…VSWVVSTGFA (163 aa). The cysteines at positions 409 and 447 are disulfide-linked. Substrate is bound by residues H424, N426, F427, D443, H471, E473, L476, and D496.

It belongs to the glycosyl hydrolase 54 family.

Its subcellular location is the secreted. The catalysed reaction is Hydrolysis of terminal non-reducing alpha-L-arabinofuranoside residues in alpha-L-arabinosides.. It participates in glycan metabolism; L-arabinan degradation. Functionally, alpha-L-arabinofuranosidase involved in the degradation of arabinoxylan, a major component of plant hemicellulose. Able to hydrolyze 1,5-, 1,3- and 1,2-alpha-linkages not only in L-arabinofuranosyl oligosaccharides, but also in polysaccharides containing terminal non-reducing L-arabinofuranoses in side chains, like L-arabinan, arabinogalactan and arabinoxylan. The polypeptide is Alpha-L-arabinofuranosidase B (abfB) (Aspergillus oryzae (strain ATCC 42149 / RIB 40) (Yellow koji mold)).